Here is a 424-residue protein sequence, read N- to C-terminus: Myb family transcription factor RLI1 (424 aa).

The disordered stretch occupies residues 144 to 165; the sequence is RPQKRDSGERTPLPPPSQQQHQ. Positions 238–298 constitute an HTH myb-type domain; sequence APSKTRIRWT…HLQKYRIAKY (61 aa). Positions 269 to 294 form a DNA-binding region, H-T-H motif; it reads PKGILKLMNSDGLTIYHIKSHLQKYR. Positions 326 to 391 form a coiled coil; the sequence is MQITEALRVQ…ELDDVVAFAA (66 aa). The LHEQLE motif lies at 342-347; sequence LHEQLE.

It belongs to the MYB-CC family. In terms of assembly, interacts with SPX1 and SPX2 in the nucleus; these interactions prevent binding to the promoters of target genes, thus regulating negatively leaf inclination in response to phosphate (Pi) starvation. As to quaternary structure, homodimer. Interacts with PHR2 in the nucleus. Mostly expressed in roots and leaves blades and, to a lower extent, in leaves sheaths, culms and panicles. Localized in leaves lamina joints. As to expression, expressed equally in shoots and roots. In terms of tissue distribution, mostly expressed in shoots and, to a lower extent, in roots.

The protein resides in the nucleus. Its function is as follows. Transcription factor binding to specific DNA sequences of target genes promoters, such as the motif R1BS 5'-NAKATNCN-3' and the motif P1BS 5'-GNATATNC-3' to trigger their expression. Nitrate-induced component involved in modulating phosphate (Pi) response and homeostasis together with PHR2; activates directly the expression of Pi starvation-induced (PSI) genes upon nitrate disponibility, thus triggering the nitrate-induced phosphate response (NIPR) promoting Pi uptake activity. Functionally, binds preferentially to the P1BS motif 5'-GNATATNC-3' in target genes promoters. Binds preferentially to the R1BS motif 5'-NAKATNCN-3' in target genes promoters, including several genes involved in the plant hormone signal transduction pathway. Involved in the shoot architecture; positively regulates leaf inclination by affecting lamina joint cell elongation via the direct promotion of ILI4/BU1 and BC1 genes expression, especially in response to phosphate (Pi) availability. Regulates both brassinolide (BL) biosynthesis and signaling by directly activating BL-biosynthesis and signaling genes. The sequence is that of Myb family transcription factor RLI1 from Oryza sativa subsp. japonica (Rice).